The chain runs to 268 residues: Tryptophan synthase alpha chain (268 aa).

Catalysis depends on proton acceptor residues E49 and D60.

It belongs to the TrpA family. In terms of assembly, tetramer of two alpha and two beta chains.

It catalyses the reaction (1S,2R)-1-C-(indol-3-yl)glycerol 3-phosphate + L-serine = D-glyceraldehyde 3-phosphate + L-tryptophan + H2O. The protein operates within amino-acid biosynthesis; L-tryptophan biosynthesis; L-tryptophan from chorismate: step 5/5. In terms of biological role, the alpha subunit is responsible for the aldol cleavage of indoleglycerol phosphate to indole and glyceraldehyde 3-phosphate. The protein is Tryptophan synthase alpha chain of Pseudomonas aeruginosa (strain UCBPP-PA14).